A 134-amino-acid polypeptide reads, in one-letter code: UPF0216 protein AF_0460 (134 aa).

This sequence belongs to the UPF0216 family.

The sequence is that of UPF0216 protein AF_0460 from Archaeoglobus fulgidus (strain ATCC 49558 / DSM 4304 / JCM 9628 / NBRC 100126 / VC-16).